We begin with the raw amino-acid sequence, 291 residues long: ATP phosphoribosyltransferase (291 aa).

It belongs to the ATP phosphoribosyltransferase family. Long subfamily. Mg(2+) serves as cofactor.

The protein localises to the cytoplasm. It catalyses the reaction 1-(5-phospho-beta-D-ribosyl)-ATP + diphosphate = 5-phospho-alpha-D-ribose 1-diphosphate + ATP. Its pathway is amino-acid biosynthesis; L-histidine biosynthesis; L-histidine from 5-phospho-alpha-D-ribose 1-diphosphate: step 1/9. With respect to regulation, feedback inhibited by histidine. Catalyzes the condensation of ATP and 5-phosphoribose 1-diphosphate to form N'-(5'-phosphoribosyl)-ATP (PR-ATP). Has a crucial role in the pathway because the rate of histidine biosynthesis seems to be controlled primarily by regulation of HisG enzymatic activity. This chain is ATP phosphoribosyltransferase, found in Trichlorobacter lovleyi (strain ATCC BAA-1151 / DSM 17278 / SZ) (Geobacter lovleyi).